We begin with the raw amino-acid sequence, 127 residues long: F420-non-reducing hydrogenase subunit G (127 aa).

It belongs to the [NiFe]/[NiFeSe] hydrogenase small subunit family. As to quaternary structure, the F420-non-reducing hydrogenase is composed of three subunits; MvhA, MvhD and MvhG. It forms a complex with the heterodisulfide reductase (hdr).

In terms of biological role, part of a complex that provides reducing equivalents for heterodisulfide reductase. The protein is F420-non-reducing hydrogenase subunit G (mvhG) of Methanothermus fervidus.